Consider the following 275-residue polypeptide: Stage 0 sporulation protein YaaT (275 aa).

In terms of domain architecture, PSP1 C-terminal spans 61–146 (RKVIRVADDR…FKTRIELRQI (86 aa)).

The protein resides in the cytoplasm. Its function is as follows. Essential for the phosphorelay during initiation of sporulation. May control the level of phosphorylated spo0A through spo0E activity during sporulation. The chain is Stage 0 sporulation protein YaaT (yaaT) from Bacillus subtilis (strain 168).